Consider the following 297-residue polypeptide: 2,3,4,5-tetrahydropyridine-2,6-dicarboxylate N-succinyltransferase (297 aa).

The Mg(2+) site is built by aspartate 148 and glutamate 165. Glutamate 181 serves as the catalytic Acyl-anhydride intermediate. Residues arginine 183, glycine 198, serine 201, alanine 224, 239 to 240 (EA), glycine 247, lysine 258, and 271 to 274 (RRDS) contribute to the succinyl-CoA site.

Belongs to the type 2 tetrahydrodipicolinate N-succinyltransferase family. Homotrimer.

It is found in the cytoplasm. The enzyme catalyses (S)-2,3,4,5-tetrahydrodipicolinate + succinyl-CoA + H2O = (S)-2-succinylamino-6-oxoheptanedioate + CoA. It participates in amino-acid biosynthesis; L-lysine biosynthesis via DAP pathway; LL-2,6-diaminopimelate from (S)-tetrahydrodipicolinate (succinylase route): step 1/3. In terms of biological role, catalyzes the conversion of the cyclic tetrahydrodipicolinate (THDP) into the acyclic N-succinyl-L-2-amino-6-oxopimelate using succinyl-CoA. The chain is 2,3,4,5-tetrahydropyridine-2,6-dicarboxylate N-succinyltransferase from Corynebacterium glutamicum (strain ATCC 13032 / DSM 20300 / JCM 1318 / BCRC 11384 / CCUG 27702 / LMG 3730 / NBRC 12168 / NCIMB 10025 / NRRL B-2784 / 534).